The sequence spans 92 residues: RNA-binding protein Hfq (92 aa).

Residues 9–68 enclose the Sm domain; sequence DPFLNALRRERVPVSVYLVNGIKLQGTIESFDQFVVLLRNTVSQMVYKHAISTVVPARNV.

The protein belongs to the Hfq family. As to quaternary structure, homohexamer.

Its function is as follows. RNA chaperone that binds small regulatory RNA (sRNAs) and mRNAs to facilitate mRNA translational regulation in response to envelope stress, environmental stress and changes in metabolite concentrations. Also binds with high specificity to tRNAs. This Xylella fastidiosa (strain M12) protein is RNA-binding protein Hfq.